The following is a 183-amino-acid chain: RFKKIRRLGALPGLTSKRPRSGSDLKNQLRSGKRSQYRIRLEEKQKLRFHYGLTERQLLKYVHIAGKAKGSTGQILLQLLEMRLDNILFRLGMASTIPGARQLVNHRHILVNGRIVDIPSYRCKPRDIITTNNKQRSKALIQNFIASSPHQEELPNHLTIDPFQYKGLVNQIIDSKWIGLKIN.

The S4 RNA-binding domain occupies 82-143 (MRLDNILFRL…KQRSKALIQN (62 aa)).

The protein belongs to the universal ribosomal protein uS4 family. In terms of assembly, part of the 30S ribosomal subunit. Contacts protein S5. The interaction surface between S4 and S5 is involved in control of translational fidelity.

Its subcellular location is the plastid. It localises to the chloroplast. One of the primary rRNA binding proteins, it binds directly to 16S rRNA where it nucleates assembly of the body of the 30S subunit. Functionally, with S5 and S12 plays an important role in translational accuracy. This is Small ribosomal subunit protein uS4c (rps4) from Crocosmia sp. (strain Porto Alegre 034).